Here is a 188-residue protein sequence, read N- to C-terminus: Ion-translocating oxidoreductase complex subunit B (188 aa).

Residues 1-26 are hydrophobic; the sequence is MMSLWIAIGALSTLALVSGVVLGFAA. A 4Fe-4S domain is found at 32-91; that stretch reads DEDPVVEQVDAILPQSQCGQCGYPGCRPYAEAVSTGGEKINKCAPGGEQVMLKLAELLAV. The [4Fe-4S] cluster site is built by Cys-49, Cys-52, Cys-57, Cys-74, Cys-117, Cys-120, Cys-123, Cys-127, Cys-147, Cys-150, Cys-153, and Cys-157. 4Fe-4S ferredoxin-type domains are found at residues 108–137 and 138–167; these read KVAF…GATR and AMHT…MIPV.

It belongs to the 4Fe4S bacterial-type ferredoxin family. RnfB subfamily. The complex is composed of six subunits: RnfA, RnfB, RnfC, RnfD, RnfE and RnfG. [4Fe-4S] cluster is required as a cofactor.

Its subcellular location is the cell inner membrane. Its function is as follows. Part of a membrane-bound complex that couples electron transfer with translocation of ions across the membrane. This Yersinia pestis bv. Antiqua (strain Antiqua) protein is Ion-translocating oxidoreductase complex subunit B.